The sequence spans 205 residues: Glycerol-3-phosphate acyltransferase (205 aa).

Topologically, residues 1 to 3 (MSA) are periplasmic. A helical transmembrane segment spans residues 4 to 24 (IAPGMILFAYLCGSISSAILV). Topologically, residues 25–52 (CRIAGLPDPRESGSGNPGATNVLRIGGK) are cytoplasmic. The chain crosses the membrane as a helical span at residues 53 to 73 (GAAVAVLIFDILKGMLPVWGA). Residues 74-80 (YALGITP) lie on the Periplasmic side of the membrane. A helical membrane pass occupies residues 81-101 (FWLGLIAIAACLGHIWPVFFG). At 102 to 111 (FKGGKGVATA) the chain is on the cytoplasmic side. Residues 112–132 (FGAIAPIGWDLTGVIAGTWLL) traverse the membrane as a helical segment. At 133 to 137 (TVLLS) the chain is on the periplasmic side. A helical transmembrane segment spans residues 138–158 (GYSSLGAIVSALIAPFYVWWF). The Cytoplasmic portion of the chain corresponds to 159–205 (KPQFTFPVSMLSCLILLRHHDNIQRLWRRQETKIWTKLKKKREKESK).

This sequence belongs to the PlsY family. As to quaternary structure, probably interacts with PlsX.

The protein localises to the cell inner membrane. The enzyme catalyses sn-glycerol 3-phosphate + an acyl-CoA = a 1-acyl-sn-glycero-3-phosphate + CoA. It catalyses the reaction a fatty acyl-[ACP] + sn-glycerol 3-phosphate = a 1-acyl-sn-glycero-3-phosphate + holo-[ACP]. It functions in the pathway lipid metabolism; phospholipid metabolism. Catalyzes the transfer of an acyl group from acyl-ACP to glycerol-3-phosphate (G3P) to form lysophosphatidic acid (LPA). This enzyme can also utilize acyl-CoA as fatty acyl donor, but not acyl-PO(4). This Salmonella arizonae (strain ATCC BAA-731 / CDC346-86 / RSK2980) protein is Glycerol-3-phosphate acyltransferase.